Reading from the N-terminus, the 486-residue chain is Bifunctional protein GlmU (486 aa).

Residues 1 to 241 (MSASDSSSAV…ARELAGVNDR (241 aa)) form a pyrophosphorylase region. Residues 13 to 16 (LAAG), Lys27, Gln84, and 89 to 90 (GT) contribute to the UDP-N-acetyl-alpha-D-glucosamine site. Asp114 serves as a coordination point for Mg(2+). Residues Gly151, Glu166, Asn181, and Asn239 each coordinate UDP-N-acetyl-alpha-D-glucosamine. Asn239 contacts Mg(2+). The segment at 242 to 262 (VQLAEAGAELNRRTVEAAMRG) is linker. The interval 263-486 (GATIVDPATT…AQNSVPNQEG (224 aa)) is N-acetyltransferase. The UDP-N-acetyl-alpha-D-glucosamine site is built by Arg344 and Lys362. His374 (proton acceptor) is an active-site residue. UDP-N-acetyl-alpha-D-glucosamine contacts are provided by Tyr377 and Asn388. Residues Ala391, 397–398 (NY), Ser416, and Ala434 each bind acetyl-CoA. The disordered stretch occupies residues 464 to 486 (KRPGTAAADAAAAAQNSVPNQEG).

This sequence in the N-terminal section; belongs to the N-acetylglucosamine-1-phosphate uridyltransferase family. It in the C-terminal section; belongs to the transferase hexapeptide repeat family. As to quaternary structure, homotrimer. The cofactor is Mg(2+).

The protein localises to the cytoplasm. The enzyme catalyses alpha-D-glucosamine 1-phosphate + acetyl-CoA = N-acetyl-alpha-D-glucosamine 1-phosphate + CoA + H(+). It catalyses the reaction N-acetyl-alpha-D-glucosamine 1-phosphate + UTP + H(+) = UDP-N-acetyl-alpha-D-glucosamine + diphosphate. It participates in nucleotide-sugar biosynthesis; UDP-N-acetyl-alpha-D-glucosamine biosynthesis; N-acetyl-alpha-D-glucosamine 1-phosphate from alpha-D-glucosamine 6-phosphate (route II): step 2/2. The protein operates within nucleotide-sugar biosynthesis; UDP-N-acetyl-alpha-D-glucosamine biosynthesis; UDP-N-acetyl-alpha-D-glucosamine from N-acetyl-alpha-D-glucosamine 1-phosphate: step 1/1. Its pathway is bacterial outer membrane biogenesis; LPS lipid A biosynthesis. Functionally, catalyzes the last two sequential reactions in the de novo biosynthetic pathway for UDP-N-acetylglucosamine (UDP-GlcNAc). The C-terminal domain catalyzes the transfer of acetyl group from acetyl coenzyme A to glucosamine-1-phosphate (GlcN-1-P) to produce N-acetylglucosamine-1-phosphate (GlcNAc-1-P), which is converted into UDP-GlcNAc by the transfer of uridine 5-monophosphate (from uridine 5-triphosphate), a reaction catalyzed by the N-terminal domain. This is Bifunctional protein GlmU from Corynebacterium efficiens (strain DSM 44549 / YS-314 / AJ 12310 / JCM 11189 / NBRC 100395).